Consider the following 284-residue polypeptide: Bifunctional protein FolD (284 aa).

Residues 165–167 and Ser190 contribute to the NADP(+) site; that span reads GRS.

It belongs to the tetrahydrofolate dehydrogenase/cyclohydrolase family. Homodimer.

It catalyses the reaction (6R)-5,10-methylene-5,6,7,8-tetrahydrofolate + NADP(+) = (6R)-5,10-methenyltetrahydrofolate + NADPH. The enzyme catalyses (6R)-5,10-methenyltetrahydrofolate + H2O = (6R)-10-formyltetrahydrofolate + H(+). The protein operates within one-carbon metabolism; tetrahydrofolate interconversion. Catalyzes the oxidation of 5,10-methylenetetrahydrofolate to 5,10-methenyltetrahydrofolate and then the hydrolysis of 5,10-methenyltetrahydrofolate to 10-formyltetrahydrofolate. This is Bifunctional protein FolD from Streptococcus gordonii (strain Challis / ATCC 35105 / BCRC 15272 / CH1 / DL1 / V288).